The sequence spans 379 residues: Homoserine O-succinyltransferase (379 aa).

The AB hydrolase-1 domain occupies 51–360 (NAVLICHALS…DSPYGHDAFL (310 aa)). Catalysis depends on S157, which acts as the Nucleophile. R227 contributes to the substrate binding site. Catalysis depends on residues D323 and H356. Substrate is bound at residue D357.

Belongs to the AB hydrolase superfamily. MetX family. In terms of assembly, homodimer.

It localises to the cytoplasm. It carries out the reaction L-homoserine + succinyl-CoA = O-succinyl-L-homoserine + CoA. The protein operates within amino-acid biosynthesis; L-methionine biosynthesis via de novo pathway; O-succinyl-L-homoserine from L-homoserine: step 1/1. Transfers a succinyl group from succinyl-CoA to L-homoserine, forming succinyl-L-homoserine. In Pseudomonas putida (strain W619), this protein is Homoserine O-succinyltransferase.